The following is a 433-amino-acid chain: Enolase (433 aa).

Position 167 (glutamine 167) interacts with (2R)-2-phosphoglycerate. Glutamate 209 functions as the Proton donor in the catalytic mechanism. Mg(2+) is bound by residues aspartate 246, glutamate 291, and aspartate 318. (2R)-2-phosphoglycerate is bound by residues lysine 343, arginine 372, serine 373, and lysine 394. Residue lysine 343 is the Proton acceptor of the active site.

It belongs to the enolase family. As to quaternary structure, component of the RNA degradosome, a multiprotein complex involved in RNA processing and mRNA degradation. It depends on Mg(2+) as a cofactor.

Its subcellular location is the cytoplasm. It localises to the secreted. It is found in the cell surface. The enzyme catalyses (2R)-2-phosphoglycerate = phosphoenolpyruvate + H2O. The protein operates within carbohydrate degradation; glycolysis; pyruvate from D-glyceraldehyde 3-phosphate: step 4/5. Catalyzes the reversible conversion of 2-phosphoglycerate (2-PG) into phosphoenolpyruvate (PEP). It is essential for the degradation of carbohydrates via glycolysis. This Shewanella frigidimarina (strain NCIMB 400) protein is Enolase.